Reading from the N-terminus, the 207-residue chain is ATP-dependent dethiobiotin synthetase BioD (207 aa).

Residue 11–16 (DVGKTF) coordinates ATP. Mg(2+) is bound at residue threonine 15. Residue lysine 31 is part of the active site. Substrate is bound at residue serine 35. ATP-binding positions include aspartate 42, 95 to 98 (ETSG), and 155 to 156 (NQ). Positions 42 and 95 each coordinate Mg(2+).

It belongs to the dethiobiotin synthetase family. As to quaternary structure, homodimer. Mg(2+) is required as a cofactor.

The protein localises to the cytoplasm. The catalysed reaction is (7R,8S)-7,8-diammoniononanoate + CO2 + ATP = (4R,5S)-dethiobiotin + ADP + phosphate + 3 H(+). It participates in cofactor biosynthesis; biotin biosynthesis; biotin from 7,8-diaminononanoate: step 1/2. In terms of biological role, catalyzes a mechanistically unusual reaction, the ATP-dependent insertion of CO2 between the N7 and N8 nitrogen atoms of 7,8-diaminopelargonic acid (DAPA, also called 7,8-diammoniononanoate) to form a ureido ring. This chain is ATP-dependent dethiobiotin synthetase BioD, found in Chlamydia abortus (strain DSM 27085 / S26/3) (Chlamydophila abortus).